The following is a 458-amino-acid chain: Argininosuccinate lyase (458 aa).

This sequence belongs to the lyase 1 family. Argininosuccinate lyase subfamily.

The protein resides in the cytoplasm. The enzyme catalyses 2-(N(omega)-L-arginino)succinate = fumarate + L-arginine. It functions in the pathway amino-acid biosynthesis; L-arginine biosynthesis; L-arginine from L-ornithine and carbamoyl phosphate: step 3/3. This is Argininosuccinate lyase from Citrifermentans bemidjiense (strain ATCC BAA-1014 / DSM 16622 / JCM 12645 / Bem) (Geobacter bemidjiensis).